The sequence spans 98 residues: Large ribosomal subunit protein uL23 (98 aa).

The protein belongs to the universal ribosomal protein uL23 family. As to quaternary structure, part of the 50S ribosomal subunit. Contacts protein L29, and trigger factor when it is bound to the ribosome.

Functionally, one of the early assembly proteins it binds 23S rRNA. One of the proteins that surrounds the polypeptide exit tunnel on the outside of the ribosome. Forms the main docking site for trigger factor binding to the ribosome. The polypeptide is Large ribosomal subunit protein uL23 (Rickettsia peacockii (strain Rustic)).